A 284-amino-acid polypeptide reads, in one-letter code: Ribosomal RNA small subunit methyltransferase A (284 aa).

S-adenosyl-L-methionine contacts are provided by His-23, Leu-25, Gly-50, Glu-71, Asp-92, and Asn-121.

The protein belongs to the class I-like SAM-binding methyltransferase superfamily. rRNA adenine N(6)-methyltransferase family. RsmA subfamily.

The protein resides in the cytoplasm. It catalyses the reaction adenosine(1518)/adenosine(1519) in 16S rRNA + 4 S-adenosyl-L-methionine = N(6)-dimethyladenosine(1518)/N(6)-dimethyladenosine(1519) in 16S rRNA + 4 S-adenosyl-L-homocysteine + 4 H(+). In terms of biological role, specifically dimethylates two adjacent adenosines (A1518 and A1519) in the loop of a conserved hairpin near the 3'-end of 16S rRNA in the 30S particle. May play a critical role in biogenesis of 30S subunits. This is Ribosomal RNA small subunit methyltransferase A from Verminephrobacter eiseniae (strain EF01-2).